Reading from the N-terminus, the 262-residue chain is Polyamine aminopropyltransferase (262 aa).

The 249-residue stretch at 1-249 (MWITQEITPY…DIHRAAFALP (249 aa)) folds into the PABS domain. Asn29 contacts S-methyl-5'-thioadenosine. Spermidine is bound at residue Asp83. Catalysis depends on Asp155, which acts as the Proton acceptor.

As to quaternary structure, homodimer.

It localises to the cytoplasm. It carries out the reaction S-adenosyl 3-(methylsulfanyl)propylamine + putrescine = S-methyl-5'-thioadenosine + spermidine + H(+). It functions in the pathway amine and polyamine biosynthesis; spermidine biosynthesis; spermidine from putrescine: step 1/1. Its activity is regulated as follows. Inhibited by methylglyoxal bis(cyclopentylamidinohydrazone)(MGBCP). Involved in the cell growth and proliferation. Catalyzes the irreversible transfer of a propylamine group from the amino donor S-adenosylmethioninamine (decarboxy-AdoMet) to putrescine (1,4-diaminobutane) to yield spermidine. Spermidine cannot be used as an aminopropyl acceptor. The chain is Polyamine aminopropyltransferase from Helicobacter pylori (strain ATCC 700392 / 26695) (Campylobacter pylori).